The primary structure comprises 628 residues: Kinesin-like protein tea2 (628 aa).

Residues 2-122 (SSSSSKPVNT…TTSQQTNSKG (121 aa)) are interaction with mal3. At S82 the chain carries Phosphoserine. Positions 132 to 460 (GIITSIRIRP…LKFASRAQNL (329 aa)) constitute a Kinesin motor domain. Residue 218 to 225 (GMTGTGKT) participates in ATP binding. Residues 530-557 (LRMEELLSDHNFEIADLRDELQDKEQII) adopt a coiled-coil conformation. The tract at residues 588–628 (VTRGSRSSSDQFSNETKTEILPDDQQQSKKDSVTQETQLLS) is disordered. Positions 589–602 (TRGSRSSSDQFSNE) are enriched in polar residues. Over residues 603–620 (TKTEILPDDQQQSKKDSV) the composition is skewed to basic and acidic residues.

Belongs to the TRAFAC class myosin-kinesin ATPase superfamily. Kinesin family. As to quaternary structure, interacts with mal3 and tip1.

It is found in the cytoplasm. The protein resides in the cytoskeleton. Its function is as follows. Promotes microtubule growth, possibly through interactions with the microtubule end, and is important for establishing and maintaining polarized growth along the long axis of the cell. Acts as a kinesin motor protein that moves along microtubules and is required for proper localization of tea1 and tip1 to the cell tips and microtubules, respectively. ATPase activity stimulated via interaction with mal3. In Schizosaccharomyces pombe (strain 972 / ATCC 24843) (Fission yeast), this protein is Kinesin-like protein tea2.